Consider the following 257-residue polypeptide: Ribonuclease HII (257 aa).

An RNase H type-2 domain is found at 70–257 (EFIAGIDEVG…PIKSMVAGGN (188 aa)). Residues Asp-76, Glu-77, and Asp-168 each contribute to the a divalent metal cation site.

The protein belongs to the RNase HII family. Requires Mn(2+) as cofactor. The cofactor is Mg(2+).

It localises to the cytoplasm. The enzyme catalyses Endonucleolytic cleavage to 5'-phosphomonoester.. Functionally, endonuclease that specifically degrades the RNA of RNA-DNA hybrids. In Streptococcus suis (strain 98HAH33), this protein is Ribonuclease HII.